Consider the following 362-residue polypeptide: 1-aminocyclopropane-1-carboxylate oxidase homolog 10 (362 aa).

The Fe2OG dioxygenase domain occupies K211 to S310. Residues H235, D237, and H291 each coordinate Fe cation. Residue R301 participates in 2-oxoglutarate binding.

This sequence belongs to the iron/ascorbate-dependent oxidoreductase family. Fe(2+) serves as cofactor.

The sequence is that of 1-aminocyclopropane-1-carboxylate oxidase homolog 10 from Arabidopsis thaliana (Mouse-ear cress).